The chain runs to 292 residues: Probable 2-(5''-triphosphoribosyl)-3'-dephosphocoenzyme-A synthase (292 aa).

Belongs to the CitG/MdcB family.

The enzyme catalyses 3'-dephospho-CoA + ATP = 2'-(5''-triphospho-alpha-D-ribosyl)-3'-dephospho-CoA + adenine. The polypeptide is Probable 2-(5''-triphosphoribosyl)-3'-dephosphocoenzyme-A synthase (Shigella flexneri serotype 5b (strain 8401)).